The primary structure comprises 216 residues: MAAGPRTSMLLAFALLCLPWTQEVGAFPAMPLSSLFANAVLRAQHLHQLAADTYKEFERAYIPEGQRYSIQNAQAAFCFSETIPAPTGKDEAQQRSDVELLRFSLLLIQSWLGPVQFLSRVFTNSLVFGTSDRVYEKLKDLEEGIQALMRELEDGSPRAGQILKQTYDKFDTNMRSDDALLKNYGLLSCFKKDLHKAETYLRVMKCRRFVESSCAF.

Positions 1–26 are cleaved as a signal peptide; sequence MAAGPRTSMLLAFALLCLPWTQEVGA. His-45 is a binding site for Zn(2+). A disulfide bridge connects residues Cys-78 and Cys-189. Ser-131 carries the phosphoserine modification. Glu-198 is a binding site for Zn(2+). Cys-206 and Cys-214 are disulfide-bonded.

The protein belongs to the somatotropin/prolactin family.

It is found in the secreted. In terms of biological role, plays an important role in growth control. Its major role in stimulating body growth is to stimulate the liver and other tissues to secrete IGF1. It stimulates both the differentiation and proliferation of myoblasts. It also stimulates amino acid uptake and protein synthesis in muscle and other tissues. This Balaenoptera physalus (Fin whale) protein is Somatotropin (GH1).